A 318-amino-acid chain; its full sequence is Ribose-phosphate pyrophosphokinase (318 aa).

Residues 46–48 (DGE) and 105–106 (RQ) contribute to the ATP site. Mg(2+)-binding residues include H139 and D178. The active site involves K201. Residues R203, D227, and 231–235 (DTAGT) contribute to the D-ribose 5-phosphate site.

This sequence belongs to the ribose-phosphate pyrophosphokinase family. Class I subfamily. As to quaternary structure, homohexamer. It depends on Mg(2+) as a cofactor.

Its subcellular location is the cytoplasm. The enzyme catalyses D-ribose 5-phosphate + ATP = 5-phospho-alpha-D-ribose 1-diphosphate + AMP + H(+). It functions in the pathway metabolic intermediate biosynthesis; 5-phospho-alpha-D-ribose 1-diphosphate biosynthesis; 5-phospho-alpha-D-ribose 1-diphosphate from D-ribose 5-phosphate (route I): step 1/1. Functionally, involved in the biosynthesis of the central metabolite phospho-alpha-D-ribosyl-1-pyrophosphate (PRPP) via the transfer of pyrophosphoryl group from ATP to 1-hydroxyl of ribose-5-phosphate (Rib-5-P). The polypeptide is Ribose-phosphate pyrophosphokinase (Helicobacter pylori (strain ATCC 700392 / 26695) (Campylobacter pylori)).